Consider the following 258-residue polypeptide: PF03932 family protein CutC (258 aa).

Belongs to the CutC family.

The protein localises to the cytoplasm. In Mesorhizobium japonicum (strain LMG 29417 / CECT 9101 / MAFF 303099) (Mesorhizobium loti (strain MAFF 303099)), this protein is PF03932 family protein CutC.